Here is a 375-residue protein sequence, read N- to C-terminus: Glutamate 5-kinase (375 aa).

K3 is an ATP binding site. Substrate is bound by residues S44, D131, and N143. Residues 163–164 and 205–211 contribute to the ATP site; these read SD and TGGMVTK. The region spanning 269 to 346 is the PUA domain; it reads EGTLWVDDGA…GDIEALLGYR (78 aa).

This sequence belongs to the glutamate 5-kinase family.

The protein localises to the cytoplasm. It carries out the reaction L-glutamate + ATP = L-glutamyl 5-phosphate + ADP. It participates in amino-acid biosynthesis; L-proline biosynthesis; L-glutamate 5-semialdehyde from L-glutamate: step 1/2. Its function is as follows. Catalyzes the transfer of a phosphate group to glutamate to form L-glutamate 5-phosphate. The sequence is that of Glutamate 5-kinase from Rhodospirillum rubrum (strain ATCC 11170 / ATH 1.1.1 / DSM 467 / LMG 4362 / NCIMB 8255 / S1).